Consider the following 364-residue polypeptide: DNA replication and repair protein RecF (364 aa).

30-37 serves as a coordination point for ATP; sequence GNNGMGKT.

Belongs to the RecF family.

It localises to the cytoplasm. Its function is as follows. The RecF protein is involved in DNA metabolism; it is required for DNA replication and normal SOS inducibility. RecF binds preferentially to single-stranded, linear DNA. It also seems to bind ATP. This Porphyromonas gingivalis (strain ATCC BAA-308 / W83) protein is DNA replication and repair protein RecF.